Reading from the N-terminus, the 246-residue chain is DNA polymerase sliding clamp 3 (246 aa).

It belongs to the PCNA family. The subunits circularize to form a toroid; DNA passes through its center. Replication factor C (RFC) is required to load the toroid on the DNA. Forms dimeric complexes with PCNA1 and PCNA2, and trimeric complexes with PCNA123 and PCNA323; does not form homotrimers. Crystal structures show a heterotetramer of 2 PCNA2 and 2 PCNA3, which would be large enough to clamp a Holliday junction.

Its function is as follows. Sliding clamp subunit that acts as a moving platform for DNA processing. Responsible for tethering the catalytic subunit of DNA polymerase and other proteins to DNA during high-speed replication. Both trimeric complexes inhibit DNA ligase and both 3'-5' and 5'-3' activity of Hel308 (Hjm) helicase, but stimulate Hjc, the Holliday junction cleavage enzyme. This Sulfurisphaera tokodaii (strain DSM 16993 / JCM 10545 / NBRC 100140 / 7) (Sulfolobus tokodaii) protein is DNA polymerase sliding clamp 3.